We begin with the raw amino-acid sequence, 96 residues long: Large ribosomal subunit protein uL23 (96 aa).

It belongs to the universal ribosomal protein uL23 family. Part of the 50S ribosomal subunit. Contacts protein L29, and trigger factor when it is bound to the ribosome.

In terms of biological role, one of the early assembly proteins it binds 23S rRNA. One of the proteins that surrounds the polypeptide exit tunnel on the outside of the ribosome. Forms the main docking site for trigger factor binding to the ribosome. The sequence is that of Large ribosomal subunit protein uL23 from Bacillus cytotoxicus (strain DSM 22905 / CIP 110041 / 391-98 / NVH 391-98).